Here is a 163-residue protein sequence, read N- to C-terminus: Large ribosomal subunit protein uL15 (163 aa).

The disordered stretch occupies residues 1-43 (MKLNEIADNEGSRKKRTRVGRGIGSGKGKQSGRGGKGQTARSG). Residues 21–37 (RGIGSGKGKQSGRGGKG) are compositionally biased toward gly residues.

The protein belongs to the universal ribosomal protein uL15 family. As to quaternary structure, part of the 50S ribosomal subunit.

Functionally, binds to the 23S rRNA. The chain is Large ribosomal subunit protein uL15 from Afipia carboxidovorans (strain ATCC 49405 / DSM 1227 / KCTC 32145 / OM5) (Oligotropha carboxidovorans).